Consider the following 195-residue polypeptide: Imidazoleglycerol-phosphate dehydratase (195 aa).

The protein belongs to the imidazoleglycerol-phosphate dehydratase family.

The protein localises to the cytoplasm. The catalysed reaction is D-erythro-1-(imidazol-4-yl)glycerol 3-phosphate = 3-(imidazol-4-yl)-2-oxopropyl phosphate + H2O. The protein operates within amino-acid biosynthesis; L-histidine biosynthesis; L-histidine from 5-phospho-alpha-D-ribose 1-diphosphate: step 6/9. In Desulfosudis oleivorans (strain DSM 6200 / JCM 39069 / Hxd3) (Desulfococcus oleovorans), this protein is Imidazoleglycerol-phosphate dehydratase.